Reading from the N-terminus, the 121-residue chain is Large ribosomal subunit protein bL12 (121 aa).

This sequence belongs to the bacterial ribosomal protein bL12 family. In terms of assembly, homodimer. Part of the ribosomal stalk of the 50S ribosomal subunit. Forms a multimeric L10(L12)X complex, where L10 forms an elongated spine to which 2 to 4 L12 dimers bind in a sequential fashion. Binds GTP-bound translation factors.

Forms part of the ribosomal stalk which helps the ribosome interact with GTP-bound translation factors. Is thus essential for accurate translation. In Shewanella frigidimarina (strain NCIMB 400), this protein is Large ribosomal subunit protein bL12.